A 198-amino-acid chain; its full sequence is 7-methyl-GTP pyrophosphatase (198 aa).

D69 acts as the Proton acceptor in catalysis.

Belongs to the Maf family. YceF subfamily. The cofactor is a divalent metal cation.

The protein resides in the cytoplasm. The enzyme catalyses N(7)-methyl-GTP + H2O = N(7)-methyl-GMP + diphosphate + H(+). Nucleoside triphosphate pyrophosphatase that hydrolyzes 7-methyl-GTP (m(7)GTP). May have a dual role in cell division arrest and in preventing the incorporation of modified nucleotides into cellular nucleic acids. The protein is 7-methyl-GTP pyrophosphatase of Yersinia pestis bv. Antiqua (strain Antiqua).